A 455-amino-acid chain; its full sequence is Adenylyltransferase and sulfurtransferase MOCS3 (455 aa).

ATP is bound by residues Gly90, Asp111, 118–122 (SNLAR), Lys135, and 179–180 (DN). The segment at 156–236 (AQALTPATAL…QPPPAETVTN (81 aa)) is interaction with NFS1. Zn(2+)-binding residues include Cys220 and Cys223. Residue Cys237 is the Glycyl thioester intermediate; for adenylyltransferase activity of the active site. Residues Cys295 and Cys298 each contribute to the Zn(2+) site. Cys314 and Cys322 are joined by a disulfide. The Rhodanese domain maps to 345–453 (SGSPHLLLDV…WAAKVDGTFP (109 aa)). Cys410 functions as the Cysteine persulfide intermediate; for sulfurtransferase activity in the catalytic mechanism. Residue Cys410 is modified to Cysteine persulfide.

In the N-terminal section; belongs to the HesA/MoeB/ThiF family. UBA4 subfamily. Interacts with NFS1. It depends on Zn(2+) as a cofactor.

It localises to the cytoplasm. The protein resides in the cytosol. The catalysed reaction is [molybdopterin-synthase sulfur-carrier protein]-C-terminal Gly-Gly + ATP + H(+) = [molybdopterin-synthase sulfur-carrier protein]-C-terminal Gly-Gly-AMP + diphosphate. It catalyses the reaction [molybdopterin-synthase sulfur-carrier protein]-C-terminal Gly-Gly-AMP + S-sulfanyl-L-cysteinyl-[cysteine desulfurase] + AH2 = [molybdopterin-synthase sulfur-carrier protein]-C-terminal-Gly-aminoethanethioate + L-cysteinyl-[cysteine desulfurase] + A + AMP + 2 H(+). It participates in tRNA modification; 5-methoxycarbonylmethyl-2-thiouridine-tRNA biosynthesis. The protein operates within cofactor biosynthesis; molybdopterin biosynthesis. Functionally, plays a central role in 2-thiolation of mcm(5)S(2)U at tRNA wobble positions of cytosolic tRNA(Lys), tRNA(Glu) and tRNA(Gln). Also essential during biosynthesis of the molybdenum cofactor. Acts by mediating the C-terminal thiocarboxylation of sulfur carriers URM1 and MOCS2A. Its N-terminus first activates URM1 and MOCS2A as acyl-adenylates (-COAMP), then the persulfide sulfur on the catalytic cysteine is transferred to URM1 and MOCS2A to form thiocarboxylation (-COSH) of their C-terminus. The reaction probably involves hydrogen sulfide that is generated from the persulfide intermediate and that acts as a nucleophile towards URM1 and MOCS2A. Subsequently, a transient disulfide bond is formed. Does not use thiosulfate as sulfur donor; NFS1 acting as a sulfur donor for thiocarboxylation reactions. This is Adenylyltransferase and sulfurtransferase MOCS3 from Sus scrofa (Pig).